A 623-amino-acid chain; its full sequence is Putative ABC transporter ATP-binding protein MG014 homolog (623 aa).

An ABC transmembrane type-1 domain is found at 16-325; it reads LILAPLFTFA…YIVLGLILTS (310 aa). 6 helical membrane passes run 27-47, 86-106, 157-177, 180-200, 266-286, and 307-327; these read IIID…VFSI, VILL…CASI, FLRL…FAIA, SDMS…IGIL, NIPF…LLVF, and IFAF…TSLT. Residues 365-611 form the ABC transporter domain; sequence LEFKNVAFGL…CDIYVKMKQA (247 aa). 400 to 407 contacts ATP; it reads GPTGSGKS.

This sequence belongs to the ABC transporter superfamily.

The protein localises to the cell membrane. This Mycoplasma pneumoniae (strain ATCC 29342 / M129 / Subtype 1) (Mycoplasmoides pneumoniae) protein is Putative ABC transporter ATP-binding protein MG014 homolog.